A 536-amino-acid chain; its full sequence is MDALVSLCKRRGFLFQSSEIYGGVQGFWDYGPLGVELKRNLKDAWWHDMISGHNELVSPAGAPSTFEMVGLDCTIIMHPQVWKCSGHYDLFHDHMVDCRESKKRYRFDQVRGRFVEYQGTKIFVSTLAEIEQEEDEVRRRGMKFFKLRPKNADELTVEKESLTLDKLDSTDNVLAPDAKTLGTLTEPREFNLMFKTTLGALGGEEDTTFLRPETAQGIFVNFKNVVDSSRVRIPFGIGQVGKSFRNEITPRNFTFRSREFEQMEIEFFCHPNQSQEWYRYWRDRRMAWYTKLGLSNESLIMREHHTEELAHYSVGTADIEYAFPFLPEGEYGELEGIAHRGDFDLRSHMEGKLDPATNPMTVELNEHGKPKHRGSGKDLAYRDDITNEKFVPHVIEPSAGADRAALAFLCEAYTEDEAPDENGKMQTRTVMKLDPRLAPIKAAVFPLVKKDGMPEVAQEIYGALKEHYNVFYDAKGAVGRRYRRQDEAGTPYCITVDGDSLTDKTVTIRDRDTLEQTRVKIDDVVSEIQSRMKAST.

The insert stretch occupies residues 56–67; that stretch reads LVSPAGAPSTFE. Residues arginine 106 and glutamate 213 each coordinate substrate. ATP is bound by residues 245 to 247, 255 to 260, and 333 to 334; these read RNE, FRSREF, and EL. Residue 260 to 264 participates in substrate binding; the sequence is FEQME. Residues 350-372 form an insert region; the sequence is EGKLDPATNPMTVELNEHGKPKH. 396-400 lines the substrate pocket; the sequence is EPSAG. ATP is bound at residue 400–403; the sequence is GADR.

It belongs to the class-II aminoacyl-tRNA synthetase family. As to quaternary structure, homodimer.

Its subcellular location is the cytoplasm. It catalyses the reaction tRNA(Gly) + glycine + ATP = glycyl-tRNA(Gly) + AMP + diphosphate. Catalyzes the attachment of glycine to tRNA(Gly). In Rhodopirellula baltica (strain DSM 10527 / NCIMB 13988 / SH1), this protein is Glycine--tRNA ligase.